A 291-amino-acid polypeptide reads, in one-letter code: Bis(5'-nucleosyl)-tetraphosphatase, symmetrical (291 aa).

The protein belongs to the Ap4A hydrolase family.

It catalyses the reaction P(1),P(4)-bis(5'-adenosyl) tetraphosphate + H2O = 2 ADP + 2 H(+). In terms of biological role, hydrolyzes diadenosine 5',5'''-P1,P4-tetraphosphate to yield ADP. In Coxiella burnetii (strain CbuG_Q212) (Coxiella burnetii (strain Q212)), this protein is Bis(5'-nucleosyl)-tetraphosphatase, symmetrical.